Consider the following 856-residue polypeptide: Putative zinc protease C28F5.4 (856 aa).

His-71 provides a ligand contact to Zn(2+). Glu-74 functions as the Proton acceptor in the catalytic mechanism. Zn(2+) is bound by residues His-75 and Glu-152.

Belongs to the peptidase M16 family.

In Caenorhabditis elegans, this protein is Putative zinc protease C28F5.4.